The primary structure comprises 151 residues: Methylglyoxal synthase (151 aa).

Positions 6-151 constitute an MGS-like domain; sequence RVMPAHKHIA…DYDAYLAERV (146 aa). Substrate contacts are provided by residues H19, K23, 45–48, and 65–66; these read TGTT and SG. The active-site Proton donor/acceptor is the D71. H98 contributes to the substrate binding site.

It belongs to the methylglyoxal synthase family.

It catalyses the reaction dihydroxyacetone phosphate = methylglyoxal + phosphate. Its function is as follows. Catalyzes the formation of methylglyoxal from dihydroxyacetone phosphate. The chain is Methylglyoxal synthase from Aliivibrio fischeri (strain MJ11) (Vibrio fischeri).